A 588-amino-acid polypeptide reads, in one-letter code: Thioredoxin domain-containing protein 3 (588 aa).

Positions 2–119 constitute a Thioredoxin domain; sequence ASKKREVQLQ…VINLIDEERK (118 aa). C39 and C42 form a disulfide bridge. NDK regions lie at residues 157 to 257, 315 to 455, and 456 to 588; these read IAII…DQPE, LEKT…STLG, and LIKP…PEEN. The interval 230-261 is disordered; that stretch reads GSKHNPPSEETEPQTDTEPNERSEDQPEVEAQ.

The protein in the C-terminal section; belongs to the NDK family. In terms of assembly, monomer. As to expression, testis-specific. Expressed only in primary spermatocytes and round spermatids.

It is found in the cytoplasm. Probably required during the final stages of sperm tail maturation in the testis and/or epididymis, where extensive disulfide bonding of fibrous sheath (FS) proteins occurs. In vitro, it has neither nucleoside diphosphate kinase (NDPK) activity nor reducing activity on disulfide bonds. Exhibits a 3'-5' exonuclease activity with a preference for single-stranded DNA, suggesting roles in DNA proofreading and repair. In Homo sapiens (Human), this protein is Thioredoxin domain-containing protein 3.